The primary structure comprises 93 residues: Large ribosomal subunit protein eL42 (93 aa).

Zn(2+) contacts are provided by Cys11, Cys14, Cys71, and Cys74. The C4-type zinc-finger motif lies at 11–74; the sequence is CRYCGKHTLH…VNIRFRCTEC (64 aa).

The protein belongs to the eukaryotic ribosomal protein eL42 family. As to quaternary structure, part of the 50S ribosomal subunit. Zn(2+) serves as cofactor.

Functionally, binds to the 23S rRNA. The protein is Large ribosomal subunit protein eL42 of Archaeoglobus fulgidus (strain ATCC 49558 / DSM 4304 / JCM 9628 / NBRC 100126 / VC-16).